A 206-amino-acid polypeptide reads, in one-letter code: Large ribosomal subunit protein eL13x (206 aa).

Residues 186 to 206 (NARHAGARAKRAAEAEKEEKK) form a disordered region. A compositionally biased stretch (basic and acidic residues) spans 196 to 206 (RAAEAEKEEKK).

Belongs to the eukaryotic ribosomal protein eL13 family.

The chain is Large ribosomal subunit protein eL13x (RPL13D) from Arabidopsis thaliana (Mouse-ear cress).